The chain runs to 226 residues: Protein B (226 aa).

An igG constant region-binding region spans residues 37–100; the sequence is DNVQGTDYEK…FSTQHLANKV (64 aa). 3 consecutive repeats follow at residues 158-168, 169-179, and 180-190; these read TKSKLDKEIWN, TRFTRDKKVLN, and VKEFKVYNTLN.

The protein localises to the secreted. Protein B belongs to the group of bacterial Fc-binding protein. The protein is Protein B of Streptococcus agalactiae.